A 221-amino-acid polypeptide reads, in one-letter code: Large ribosomal subunit protein bL25 (221 aa).

The interval 192–221 is disordered; sequence APRVEKEETEEDTVAPGDVPAENSKDADEE.

The protein belongs to the bacterial ribosomal protein bL25 family. CTC subfamily. Part of the 50S ribosomal subunit; part of the 5S rRNA/L5/L18/L25 subcomplex. Contacts the 5S rRNA. Binds to the 5S rRNA independently of L5 and L18.

Its function is as follows. This is one of the proteins that binds to the 5S RNA in the ribosome where it forms part of the central protuberance. This is Large ribosomal subunit protein bL25 from Idiomarina loihiensis (strain ATCC BAA-735 / DSM 15497 / L2-TR).